Reading from the N-terminus, the 370-residue chain is Anhydro-N-acetylmuramic acid kinase (370 aa).

Position 13–20 (13–20) interacts with ATP; it reads GTSMDGVD.

The protein belongs to the anhydro-N-acetylmuramic acid kinase family.

It carries out the reaction 1,6-anhydro-N-acetyl-beta-muramate + ATP + H2O = N-acetyl-D-muramate 6-phosphate + ADP + H(+). It participates in amino-sugar metabolism; 1,6-anhydro-N-acetylmuramate degradation. Its pathway is cell wall biogenesis; peptidoglycan recycling. Functionally, catalyzes the specific phosphorylation of 1,6-anhydro-N-acetylmuramic acid (anhMurNAc) with the simultaneous cleavage of the 1,6-anhydro ring, generating MurNAc-6-P. Is required for the utilization of anhMurNAc either imported from the medium or derived from its own cell wall murein, and thus plays a role in cell wall recycling. In Shewanella frigidimarina (strain NCIMB 400), this protein is Anhydro-N-acetylmuramic acid kinase.